Here is a 113-residue protein sequence, read N- to C-terminus: Hydrogenase maturation factor HypA (113 aa).

Ni(2+) is bound at residue histidine 2. Zn(2+) is bound by residues cysteine 73, cysteine 76, cysteine 89, and cysteine 92.

It belongs to the HypA/HybF family.

Involved in the maturation of [NiFe] hydrogenases. Required for nickel insertion into the metal center of the hydrogenase. The polypeptide is Hydrogenase maturation factor HypA (Legionella pneumophila (strain Paris)).